Consider the following 147-residue polypeptide: Large ribosomal subunit protein uL13 (147 aa).

It belongs to the universal ribosomal protein uL13 family. Part of the 50S ribosomal subunit.

Functionally, this protein is one of the early assembly proteins of the 50S ribosomal subunit, although it is not seen to bind rRNA by itself. It is important during the early stages of 50S assembly. This Polaromonas naphthalenivorans (strain CJ2) protein is Large ribosomal subunit protein uL13.